A 110-amino-acid polypeptide reads, in one-letter code: MAGWFELSKSSDSQFRFVLKAGNGETILTSELYTSKASAEKGIASVRSNSPQEERYEKKTASNGKFYFNLKAANHQIIGSSQMYATAQSRETGIASVKANGTSQTVKDNT.

2 repeat units span residues 10–58 and 61–109.

The protein belongs to the UPF0339 family. Duplicated subfamily.

This chain is UPF0339 protein YegP (yegP), found in Escherichia coli O157:H7.